The sequence spans 111 residues: Large ribosomal subunit protein uL23 (111 aa).

This sequence belongs to the universal ribosomal protein uL23 family. In terms of assembly, part of the 50S ribosomal subunit. Contacts protein L29, and trigger factor when it is bound to the ribosome.

Functionally, one of the early assembly proteins it binds 23S rRNA. One of the proteins that surrounds the polypeptide exit tunnel on the outside of the ribosome. Forms the main docking site for trigger factor binding to the ribosome. The sequence is that of Large ribosomal subunit protein uL23 from Nitrosospira multiformis (strain ATCC 25196 / NCIMB 11849 / C 71).